Consider the following 876-residue polypeptide: Neurotrypsin (876 aa).

A signal peptide spans Met1–Gly20. The N-linked (GlcNAc...) asparagine glycan is linked to Asn26. Residues Leu29–Pro89 form a disordered region. Residues Tyr43 to Pro54 are compositionally biased toward low complexity. Residues Thr57–Ala72 show a composition bias toward pro residues. The Kringle domain occupies Cys94–Cys166. Disulfide bonds link Cys94/Cys166, Cys110/Cys150, Cys139/Cys164, Cys196/Cys260, Cys209/Cys270, Cys240/Cys250, Cys306/Cys370, Cys319/Cys380, Cys350/Cys360, Cys413/Cys476, Cys426/Cys486, Cys456/Cys466, Cys526/Cys590, Cys539/Cys600, Cys570/Cys580, Cys620/Cys751, Cys662/Cys678, Cys766/Cys832, Cys795/Cys809, and Cys822/Cys851. SRCR domains follow at residues Val171 to Phe272, Ile281 to Pro382, Ile388 to Pro488, and Val501 to Tyr602. Residues Cys620–Arg631 form a zymogen activation region region. The Peptidase S1 domain occupies Ile632–Lys875. The Charge relay system role is filled by His677. The N-linked (GlcNAc...) asparagine glycan is linked to Asn684. Catalysis depends on Asp727, which acts as the Charge relay system. The Charge relay system role is filled by Ser826.

This sequence belongs to the peptidase S1 family.

It localises to the secreted. Plays a role in neuronal plasticity and the proteolytic action may subserve structural reorganizations associated with learning and memory operations. The sequence is that of Neurotrypsin (PRSS12) from Gorilla gorilla gorilla (Western lowland gorilla).